We begin with the raw amino-acid sequence, 394 residues long: MTAANLLEFDLDALAAFCEQLGEKRFRATQLFRWIHQKGQSDFAQMSDLAKSLREKLAGRAVVRPLAVLSEHVSADGTVKWLFDVGGGNAVETVFIPENDRGTLCISSQAGCAVGCRFCSTGHQGFSRNLSTGEIVAQLWHAEHQLRARLGTTERVISNVVMMGMGEPLQNYAALLPALRVMLDDHGYGLSRRRVTVSTSGVVPMIDRLREDCPVALAVSLHAPTDALRDDLVPLNRKYPIAELLEACQRYLEAAPRDFITFEYCMLDGVNDSEAQARELLRLVGERGPVGRVPCKINLIPFNPFPASGLTRSSVARVQAFAQLLVDGGLVTTVRRTRGDDIDAACGQLAGEVQDRTNAQARMRRAPIAIRPIDSAVQRRADAAPSGSATETTR.

The active-site Proton acceptor is glutamate 92. One can recognise a Radical SAM core domain in the interval 98 to 341; it reads ENDRGTLCIS…TTVRRTRGDD (244 aa). Cysteines 105 and 346 form a disulfide. Residues cysteine 112, cysteine 116, and cysteine 119 each contribute to the [4Fe-4S] cluster site. Residues 166–167, serine 198, 220–222, and asparagine 303 each bind S-adenosyl-L-methionine; these read GE and SLH. Residue cysteine 346 is the S-methylcysteine intermediate of the active site. The tract at residues 374-394 is disordered; that stretch reads DSAVQRRADAAPSGSATETTR.

Belongs to the radical SAM superfamily. RlmN family. [4Fe-4S] cluster serves as cofactor.

Its subcellular location is the cytoplasm. It carries out the reaction adenosine(2503) in 23S rRNA + 2 reduced [2Fe-2S]-[ferredoxin] + 2 S-adenosyl-L-methionine = 2-methyladenosine(2503) in 23S rRNA + 5'-deoxyadenosine + L-methionine + 2 oxidized [2Fe-2S]-[ferredoxin] + S-adenosyl-L-homocysteine. It catalyses the reaction adenosine(37) in tRNA + 2 reduced [2Fe-2S]-[ferredoxin] + 2 S-adenosyl-L-methionine = 2-methyladenosine(37) in tRNA + 5'-deoxyadenosine + L-methionine + 2 oxidized [2Fe-2S]-[ferredoxin] + S-adenosyl-L-homocysteine. Functionally, specifically methylates position 2 of adenine 2503 in 23S rRNA and position 2 of adenine 37 in tRNAs. m2A2503 modification seems to play a crucial role in the proofreading step occurring at the peptidyl transferase center and thus would serve to optimize ribosomal fidelity. The protein is Dual-specificity RNA methyltransferase RlmN of Methylibium petroleiphilum (strain ATCC BAA-1232 / LMG 22953 / PM1).